The chain runs to 449 residues: MFTVAIIGRPNVGKSSLFNRLIQKPYAIISDTPNTTRDRIYGVGEWLTRQIAFIDTGGLISQKTPLQQQIEVQVRAALSQANAIIFLVSYQEQISSDDFYVAKVLKKIKDKPILLVVNKSENLKPDAYEPNLQQFYSFGFGQPVCVSASHGIGIGNLMDRLVKDNQLPPYHGSSETNPEVRFCVIGKPNVGKSSLINQLVQQNRVLVSDESGTTRDAIDIPLRVNGQNYLLIDTAGIRRKGKIAPGIEAASYGKTQLAIARSNIILLMVDGSKPLSEQDEIIGGLAQAALIPVIILVNKWDLVQKDSNTMAKFKKQLQSQFQHLSFAPIVFISVKNNKRLHTIFEQLQIIQEQLTKKISTSLLNDVIQQAQLFNQAPLFKGGRLQVTYAVQTHSQTPHFVLFCNDPKFVHFSYARFLENKIRESFGFSAVPITLYFKSKNARIRGVAKT.

EngA-type G domains are found at residues 2-169 (FTVA…QLPP) and 180-355 (VRFC…EQLT). Residues 8 to 15 (GRPNVGKS), 55 to 59 (DTGGL), 118 to 121 (NKSE), 186 to 193 (GKPNVGKS), 233 to 237 (DTAGI), and 298 to 301 (NKWD) each bind GTP. One can recognise a KH-like domain in the interval 356–440 (KKISTSLLND…PITLYFKSKN (85 aa)).

It belongs to the TRAFAC class TrmE-Era-EngA-EngB-Septin-like GTPase superfamily. EngA (Der) GTPase family. In terms of assembly, associates with the 50S ribosomal subunit.

Functionally, GTPase that plays an essential role in the late steps of ribosome biogenesis. The chain is GTPase Der from Mycoplasma pneumoniae (strain ATCC 29342 / M129 / Subtype 1) (Mycoplasmoides pneumoniae).